Here is a 172-residue protein sequence, read N- to C-terminus: Protein-export protein SecB (172 aa).

This sequence belongs to the SecB family. Homotetramer, a dimer of dimers. One homotetramer interacts with 1 SecA dimer.

Its subcellular location is the cytoplasm. Functionally, one of the proteins required for the normal export of preproteins out of the cell cytoplasm. It is a molecular chaperone that binds to a subset of precursor proteins, maintaining them in a translocation-competent state. It also specifically binds to its receptor SecA. This Bordetella avium (strain 197N) protein is Protein-export protein SecB.